A 438-amino-acid chain; its full sequence is Lipoyl synthase, mitochondrial (438 aa).

The N-terminal 31 residues, 1–31, are a transit peptide targeting the mitochondrion; that stretch reads MAASARGLRTLQSAHSSTTVPRLQLAVSRCY. Positions 34–57 are enriched in low complexity; sequence TTSPDPPITNSSNSSNSSNSTPTP. A disordered region spans residues 34-58; sequence TTSPDPPITNSSNSSNSSNSTPTPK. The [4Fe-4S] cluster site is built by Cys-148, Cys-153, Cys-159, Cys-179, Cys-183, Cys-186, and Ser-394. Positions 162–383 constitute a Radical SAM core domain; that stretch reads GSSKSAATAT…KERALEMGFL (222 aa).

This sequence belongs to the radical SAM superfamily. Lipoyl synthase family. It depends on [4Fe-4S] cluster as a cofactor.

The protein localises to the mitochondrion. The catalysed reaction is [[Fe-S] cluster scaffold protein carrying a second [4Fe-4S](2+) cluster] + N(6)-octanoyl-L-lysyl-[protein] + 2 oxidized [2Fe-2S]-[ferredoxin] + 2 S-adenosyl-L-methionine + 4 H(+) = [[Fe-S] cluster scaffold protein] + N(6)-[(R)-dihydrolipoyl]-L-lysyl-[protein] + 4 Fe(3+) + 2 hydrogen sulfide + 2 5'-deoxyadenosine + 2 L-methionine + 2 reduced [2Fe-2S]-[ferredoxin]. It participates in protein modification; protein lipoylation via endogenous pathway; protein N(6)-(lipoyl)lysine from octanoyl-[acyl-carrier-protein]: step 2/2. Catalyzes the radical-mediated insertion of two sulfur atoms into the C-6 and C-8 positions of the octanoyl moiety bound to the lipoyl domains of lipoate-dependent enzymes, thereby converting the octanoylated domains into lipoylated derivatives. The polypeptide is Lipoyl synthase, mitochondrial (Paracoccidioides brasiliensis (strain Pb18)).